The primary structure comprises 303 residues: MISIFSKLKQGLSKTSGKISAGIDKIFYKKKLDAETLEELEELLISTDMGSLVAAKIIEDFKSLKFDKEVETTEIKETLANLIEQQLLESEIPFTLNENKLNVVLVCGVNGAGKTTTIGKLAAMYGMQGKKVAVAACDTFRAAAVNQLDSWVTRAKALLITGEEAADPASVAYRAVEESIKQDIDILFIDTAGRLHNKKNLMDELTKIVKVIKKVDENLPTHSVLVIDAITGQNTYNQVEHFNDATNLTGLIVTKLDGSAKAGVIVGVVQRFNLPIYFIGIGEQIEDLKIFNRHDFAKSLVGL.

GTP is bound by residues 108-115 (GVNGAGKT), 190-194 (DTAGR), and 254-257 (TKLD).

The protein belongs to the GTP-binding SRP family. FtsY subfamily. As to quaternary structure, part of the signal recognition particle protein translocation system, which is composed of SRP and FtsY. SRP is a ribonucleoprotein composed of Ffh and a 4.5S RNA molecule.

The protein localises to the cell inner membrane. Its subcellular location is the cytoplasm. It carries out the reaction GTP + H2O = GDP + phosphate + H(+). In terms of biological role, involved in targeting and insertion of nascent membrane proteins into the cytoplasmic membrane. Acts as a receptor for the complex formed by the signal recognition particle (SRP) and the ribosome-nascent chain (RNC). Interaction with SRP-RNC leads to the transfer of the RNC complex to the Sec translocase for insertion into the membrane, the hydrolysis of GTP by both Ffh and FtsY, and the dissociation of the SRP-FtsY complex into the individual components. In Rickettsia bellii (strain RML369-C), this protein is Signal recognition particle receptor FtsY.